Consider the following 374-residue polypeptide: Pectate lyase 3 (374 aa).

The N-terminal stretch at 1–22 (MKYLLPSAAAGLLLLAAQPTMA) is a signal peptide. Cysteines 93 and 176 form a disulfide. Residues Asp-150, Asp-152, Glu-187, and Asp-191 each contribute to the Ca(2+) site. The active site involves Arg-239. The cysteines at positions 350 and 373 are disulfide-linked.

Belongs to the polysaccharide lyase 1 family. PLADES subfamily. It depends on Ca(2+) as a cofactor.

The protein resides in the secreted. The catalysed reaction is Eliminative cleavage of (1-&gt;4)-alpha-D-galacturonan to give oligosaccharides with 4-deoxy-alpha-D-galact-4-enuronosyl groups at their non-reducing ends.. It participates in glycan metabolism; pectin degradation; 2-dehydro-3-deoxy-D-gluconate from pectin: step 2/5. Its function is as follows. Involved in maceration and soft-rotting of plant tissue. The sequence is that of Pectate lyase 3 (pel3) from Pectobacterium carotovorum subsp. carotovorum (Erwinia carotovora subsp. carotovora).